The primary structure comprises 287 residues: Eukaryotic translation initiation factor 3 subunit G (287 aa).

Residues 163 to 207 (EEDLESKEKDTKLGPTVPGSGKYVAPGMRGDRPAVTGGAERRSEE) are disordered. Positions 208–286 (NTCRVTNLPE…LVLKVEWTRF (79 aa)) constitute an RRM domain.

It belongs to the eIF-3 subunit G family. Component of the eukaryotic translation initiation factor 3 (eIF-3) complex.

The protein resides in the cytoplasm. Functionally, RNA-binding component of the eukaryotic translation initiation factor 3 (eIF-3) complex, which is involved in protein synthesis of a specialized repertoire of mRNAs and, together with other initiation factors, stimulates binding of mRNA and methionyl-tRNAi to the 40S ribosome. The eIF-3 complex specifically targets and initiates translation of a subset of mRNAs involved in cell proliferation. This subunit can bind 18S rRNA. The polypeptide is Eukaryotic translation initiation factor 3 subunit G (Brugia malayi (Filarial nematode worm)).